The chain runs to 120 residues: Ribonuclease P protein component 2 (120 aa).

Belongs to the eukaryotic/archaeal RNase P protein component 2 family. Consists of a catalytic RNA component and at least 4-5 protein subunits. Forms a subcomplex with Rnp3 which stimulates the catalytic RNA.

It localises to the cytoplasm. It catalyses the reaction Endonucleolytic cleavage of RNA, removing 5'-extranucleotides from tRNA precursor.. Functionally, part of ribonuclease P, a protein complex that generates mature tRNA molecules by cleaving their 5'-ends. The RNA is catalytic, but its KM for pre-tRNA is 170-fold decreased in the presence of the 4 known protein subunits (Rnp1-4). The protein subunits also decrease the amount of Mg(2+) needed for activity. In Pyrococcus furiosus (strain ATCC 43587 / DSM 3638 / JCM 8422 / Vc1), this protein is Ribonuclease P protein component 2.